The primary structure comprises 258 residues: Thiazole synthase (258 aa).

K98 (schiff-base intermediate with DXP) is an active-site residue. Residues G159, A185–G186, and N207–T208 each bind 1-deoxy-D-xylulose 5-phosphate.

This sequence belongs to the ThiG family. In terms of assembly, homotetramer. Forms heterodimers with either ThiH or ThiS.

It localises to the cytoplasm. It carries out the reaction [ThiS sulfur-carrier protein]-C-terminal-Gly-aminoethanethioate + 2-iminoacetate + 1-deoxy-D-xylulose 5-phosphate = [ThiS sulfur-carrier protein]-C-terminal Gly-Gly + 2-[(2R,5Z)-2-carboxy-4-methylthiazol-5(2H)-ylidene]ethyl phosphate + 2 H2O + H(+). The protein operates within cofactor biosynthesis; thiamine diphosphate biosynthesis. In terms of biological role, catalyzes the rearrangement of 1-deoxy-D-xylulose 5-phosphate (DXP) to produce the thiazole phosphate moiety of thiamine. Sulfur is provided by the thiocarboxylate moiety of the carrier protein ThiS. In vitro, sulfur can be provided by H(2)S. This chain is Thiazole synthase, found in Cytophaga hutchinsonii (strain ATCC 33406 / DSM 1761 / CIP 103989 / NBRC 15051 / NCIMB 9469 / D465).